Here is a 470-residue protein sequence, read N- to C-terminus: Box C/D snoRNA protein 1 (470 aa).

Residues 1–70 form a disordered region; the sequence is MEFAAENEGK…EEGSGQRPEE (70 aa). The residue at position 25 (S25) is a Phosphoserine. Over residues 41 to 51 the composition is skewed to gly residues; sequence EFGGGEEGTGL. Residues K79, K108, K118, K138, K143, K153, K162, K173, K183, and K200 each participate in a glycyl lysine isopeptide (Lys-Gly) (interchain with G-Cter in SUMO2) cross-link. C220, C223, C232, C235, C240, C244, H248, and C254 together coordinate Zn(2+). Residues 220 to 254 form an HIT-type zinc finger; the sequence is CETCGTEEAKYRCPRCMRYSCSLPCVKKHKAELTC. K459 is covalently cross-linked (Glycyl lysine isopeptide (Lys-Gly) (interchain with G-Cter in SUMO2)).

This sequence belongs to the BCD1 family. Interacts with FBL, SNU13, NOP58, NUFIP1, RUVBL1, RUVBL2 and TAF9. Interacts (via HIT-type zinc finger) with the RUVBL1/RUVBL2 complex in the presence of ADP.

Required for box C/D snoRNAs accumulation involved in snoRNA processing, snoRNA transport to the nucleolus and ribosome biogenesis. The polypeptide is Box C/D snoRNA protein 1 (ZNHIT6) (Homo sapiens (Human)).